A 37-amino-acid polypeptide reads, in one-letter code: Cellular retinoic acid-binding protein 2 (37 aa).

The short motif at lysine 21 to lysine 31 is the Nuclear localization signal element.

This sequence belongs to the calycin superfamily. Fatty-acid binding protein (FABP) family. As to expression, embryo.

It localises to the cytoplasm. The protein localises to the endoplasmic reticulum. The protein resides in the nucleus. Transports retinoic acid to the nucleus. Regulates the access of retinoic acid to the nuclear retinoic acid receptors. This chain is Cellular retinoic acid-binding protein 2 (CRABP2), found in Gallus gallus (Chicken).